The sequence spans 110 residues: Insulin (110 aa).

The N-terminal stretch at 1–24 (MALWMRLLPLLAFLILWEPSPAHA) is a signal peptide. 3 disulfide bridges follow: Cys31/Cys96, Cys43/Cys109, and Cys95/Cys100. The propeptide at 57–87 (GVDDPQMPQLELGGSPGAGDLRALALEVARQ) is c peptide.

It belongs to the insulin family. As to quaternary structure, heterodimer of a B chain and an A chain linked by two disulfide bonds.

It localises to the secreted. Insulin decreases blood glucose concentration. It increases cell permeability to monosaccharides, amino acids and fatty acids. It accelerates glycolysis, the pentose phosphate cycle, and glycogen synthesis in liver. The chain is Insulin (INS) from Psammomys obesus (Fat sand rat).